The following is a 297-amino-acid chain: Probable esterase afoC (297 aa).

Residue Ser136 is the Charge relay system of the active site. The span at 204–217 (ASSSASASVSGSES) shows a compositional bias: low complexity. Residues 204–226 (ASSSASASVSGSESAGEEEEDGH) form a disordered region. Residues Asp240 and His267 each act as charge relay system in the active site.

The protein belongs to the LovG family.

Functionally, probable esterase; part of the gene cluster that mediates the biosynthesis of asperfuranone, a probable antitumor agent. The polyketide synthase afoG is responsible for producing the 3,5-dimethyloctadienone moiety from acetyl-CoA, three malonyl-CoA, and two S-adenosyl methionines (SAM). The 3,5-dimethyloctadienone moiety is then loaded onto the SAT domain of afoE and extended with four malonyl-CoA and one SAM, which leads to the formation of 2,4-dihydroxy-6-(5,7-dimethyl-2-oxo-trans-3-trans-5-nonadienyl)-3-methylbenzaldehyde (compound 2) after reductive release and aldol condensation. AfoD is the next enzyme in the biosynthesis sequence and hydroxylates the side chain at the benzylic position of compound 2. After benzylic hydroxylation, a furan ring is formed after five-member ring hemiacetal formation and water elimination. AfoF and afoC are proposed to oxidize the R-diketone proton and to reduce the unconjugated carbonyl group, respectively, to generate asperfuranone. Since no intermediates could be isolated from afoF and afoC deletants, the sequence of these two enzymes is not fully understood. Moreover, since afoC deletant still produces a small amount of asperfuranone, other endogenous oxidoreductases might catalyze the same reaction with much less efficiency. The polypeptide is Probable esterase afoC (Emericella nidulans (strain FGSC A4 / ATCC 38163 / CBS 112.46 / NRRL 194 / M139) (Aspergillus nidulans)).